Here is a 190-residue protein sequence, read N- to C-terminus: MYTALQKIHKDKDAEPTEFEENVAQALFDFENTNQEIKSDLKDLYINSALQIDVSGGKKAVVIHVPYRLRKSFRKIHPRLVRELEKKFSGKEVVLIATRRILRPPKKGSAVQRPRSRTLTAVHDAMLEDIVYPAEIVGKRVRYRLDGSKIMKVFLDPKAKNDTENKLETFAGVYRKLSGKDVVFEFPLTE.

It belongs to the eukaryotic ribosomal protein eS7 family.

The protein is Small ribosomal subunit protein eS7 (RPS7) of Avicennia marina (Grey mangrove).